The chain runs to 243 residues: Uridylate kinase (243 aa).

15–18 (KLSG) contributes to the ATP binding site. The involved in allosteric activation by GTP stretch occupies residues 23–28 (GEEGFG). Gly57 contacts UMP. Positions 58 and 62 each coordinate ATP. UMP-binding positions include Asp77 and 138–145 (TGNPFFTT). Residues Thr165, Phe171, and Asp174 each contribute to the ATP site.

This sequence belongs to the UMP kinase family. As to quaternary structure, homohexamer.

It is found in the cytoplasm. It carries out the reaction UMP + ATP = UDP + ADP. Its pathway is pyrimidine metabolism; CTP biosynthesis via de novo pathway; UDP from UMP (UMPK route): step 1/1. Its activity is regulated as follows. Allosterically activated by GTP. Inhibited by UTP. In terms of biological role, catalyzes the reversible phosphorylation of UMP to UDP. The polypeptide is Uridylate kinase (Vibrio campbellii (strain ATCC BAA-1116)).